Reading from the N-terminus, the 209-residue chain is Small ribosomal subunit protein uS4 (209 aa).

The region spanning 98-159 is the S4 RNA-binding domain; the sequence is RRLDSAVYRL…KSRKITRIND (62 aa).

This sequence belongs to the universal ribosomal protein uS4 family. In terms of assembly, part of the 30S ribosomal subunit. Contacts protein S5. The interaction surface between S4 and S5 is involved in control of translational fidelity.

Its function is as follows. One of the primary rRNA binding proteins, it binds directly to 16S rRNA where it nucleates assembly of the body of the 30S subunit. In terms of biological role, with S5 and S12 plays an important role in translational accuracy. The chain is Small ribosomal subunit protein uS4 from Syntrophotalea carbinolica (strain DSM 2380 / NBRC 103641 / GraBd1) (Pelobacter carbinolicus).